Here is an 86-residue protein sequence, read N- to C-terminus: Neuropeptide precursor capa-1 (86 aa).

A signal peptide spans 1–19; sequence MLLWIVATLLIFSLPVSTA.

As to expression, expressed in two pairs of neurons in the anterior part of the nervous system (at protein level).

Functionally, encodes at least three neuropeptides: two of the periviscerokinin family (APHPSSALLVPYPRV-amide and LYMARV-amide) and one pyrokinin (AFFYTPRI-amide). Its function is as follows. Putative ligand for neuromedin U receptor homolog nmur-2. This chain is Neuropeptide precursor capa-1, found in Caenorhabditis elegans.